Consider the following 276-residue polypeptide: MTLAHIFQTIWDFGTKDSVLQPIWDYVRLNHSETLRSPLFPVVLTVSSYFVLVLPYLSCDILGRKWPAIYRYKIQPDKLPTTAMLLHCSGVTLYNHILLVIPAAVAQWMWRPPIPLPEQAPTLLELVGGVTGNLLLFDLQYFIWHFLHHKIRWLYVTFHAIHHNYSAPFALATQCLGGWELVTVGFWTTLNPVLLRCHLLTTWMFMVVHVYVSVEDHCGYDFPWSTSRLIPFGVYGGPSKHDVHHQKPNTNFAPHFSHWDKMFGTHADFRFSKPRE.

Asparagine 30 carries N-linked (GlcNAc...) asparagine glycosylation. The next 3 helical transmembrane spans lie at 39-59 (LFPV…YLSC), 90-110 (GVTL…QWMW), and 126-146 (LVGG…IWHF). A Fatty acid hydroxylase domain is found at 134-265 (LLLFDLQYFI…FSHWDKMFGT (132 aa)). The Histidine box-1 signature appears at 144–148 (WHFLH). Positions 159 to 163 (HAIHH) match the Histidine box-2 motif. N-linked (GlcNAc...) asparagine glycosylation is present at asparagine 164. A run of 2 helical transmembrane segments spans residues 175–195 (CLGG…PVLL) and 199–219 (LLTT…DHCG). A Histidine box-3 motif is present at residues 240–246 (KHDVHHQ).

The protein belongs to the sterol desaturase family. The cofactor is Fe cation.

The protein localises to the endoplasmic reticulum membrane. May catalyze the formation of 25-hydroxycholesterol from cholesterol. This Danio rerio (Zebrafish) protein is Cholesterol 25-hydroxylase-like protein 1, member 2.